Reading from the N-terminus, the 635-residue chain is 1-deoxy-D-xylulose-5-phosphate synthase (635 aa).

Thiamine diphosphate is bound by residues histidine 76 and 117–119 (GHS). Aspartate 148 lines the Mg(2+) pocket. Thiamine diphosphate contacts are provided by residues 149–150 (GA), asparagine 177, tyrosine 294, and glutamate 379. A Mg(2+)-binding site is contributed by asparagine 177.

Belongs to the transketolase family. DXPS subfamily. As to quaternary structure, homodimer. Mg(2+) serves as cofactor. Requires thiamine diphosphate as cofactor.

It catalyses the reaction D-glyceraldehyde 3-phosphate + pyruvate + H(+) = 1-deoxy-D-xylulose 5-phosphate + CO2. It functions in the pathway metabolic intermediate biosynthesis; 1-deoxy-D-xylulose 5-phosphate biosynthesis; 1-deoxy-D-xylulose 5-phosphate from D-glyceraldehyde 3-phosphate and pyruvate: step 1/1. Its function is as follows. Catalyzes the acyloin condensation reaction between C atoms 2 and 3 of pyruvate and glyceraldehyde 3-phosphate to yield 1-deoxy-D-xylulose-5-phosphate (DXP). In Neisseria meningitidis serogroup C (strain 053442), this protein is 1-deoxy-D-xylulose-5-phosphate synthase.